A 317-amino-acid polypeptide reads, in one-letter code: Cytochrome f (317 aa).

Positions 1-34 are cleaved as a signal peptide; the sequence is MKGLKNQIMKKTSLFICTLLFILSIVFYPKITFA. The heme site is built by Tyr35, Cys55, Cys58, and His59. Residues 284-304 form a helical membrane-spanning segment; sequence VIGLIAFFIGVGLTQILLVLK.

This sequence belongs to the cytochrome f family. The 4 large subunits of the cytochrome b6-f complex are cytochrome b6, subunit IV (17 kDa polypeptide, PetD), cytochrome f and the Rieske protein, while the 4 small subunits are PetG, PetL, PetM and PetN. The complex functions as a dimer. Requires heme as cofactor.

It localises to the cellular thylakoid membrane. Its function is as follows. Component of the cytochrome b6-f complex, which mediates electron transfer between photosystem II (PSII) and photosystem I (PSI), cyclic electron flow around PSI, and state transitions. This is Cytochrome f from Prochlorococcus marinus (strain MIT 9215).